The sequence spans 338 residues: MNLQRFPRYPLTFGPTPIQPLKRLSEHLGGKVELYAKREDCNSGLAFGGNKTRKLEYLIPDALEQRADTLVSIGGVQSNQTRQVAAVAAHLGMKCVLVQEHWVNYDDPVYDRVGNIQLSRMMGADVRLVPDGFDIGIRRSWEEALESVKQAGGRPYPIPAGCSEHPLGGLGFVGFAEEVRAQEAQFGLRFDYIVVCSVTGSTQAGMIVGFAADGRADRVIGIDASATPARTREQITRIARHTAELVDLGRDITDADVVLDTRYAGPEYGLPNEGTLEAIRLCARLEGVLTDPVYEGKSMHGMIDKVRRGEFEPGSKVLYAHLGGVPALSAYSAIFADG.

K51 is modified (N6-(pyridoxal phosphate)lysine). The active-site Nucleophile is the S78.

The protein belongs to the ACC deaminase/D-cysteine desulfhydrase family. Homotrimer. It depends on pyridoxal 5'-phosphate as a cofactor.

The enzyme catalyses 1-aminocyclopropane-1-carboxylate + H2O = 2-oxobutanoate + NH4(+). Functionally, catalyzes a cyclopropane ring-opening reaction, the irreversible conversion of 1-aminocyclopropane-1-carboxylate (ACC) to ammonia and alpha-ketobutyrate. Allows growth on ACC as a nitrogen source. This chain is 1-aminocyclopropane-1-carboxylate deaminase, found in Burkholderia multivorans (strain ATCC 17616 / 249).